The following is an 852-amino-acid chain: MNMSKQGIFQTVGSGLDHILSLADIEEEQMIQSVVRTAVTGASYFTSVDQSSVHTAEVGLHQIEPLKTSVDKPSSKKTQGEKFFLIHSADWLTTHALFHEVAKLDVVKLLYNEQFAVQGLLRYHTYARFGIEIQVQINPTPFQQGGLICAMVPSDQSYGSIASLTVYPHGLLNCNINNVVRIKVPFIYTRGAYHFKDPQYPVWELTIRVWSELNIGTGTSAYTSLNVLARFTDLELHGLTPLSTQMMRNEFRVSTTENVVNLSNYEDARAKMSFALDQEDWKSDPSQGGGIKITHFTTWTSIPTLAAQFPFNASDSVGQQIKVIPVDPYFFQMTNTNPDQKCITALASICQMFCFWRGDLVFDFQVFPTKYHSGRLLFCFVPGNELIDVTGITLKQATTAPCAVMDITGVQSTLRFRVPWISDTPYRVNRYTKSAHQKGEYTAIGKLIVYCYNRLTSPSNVASHVRVNVYLSAINLECFAPLYHAMDVTTQVGDDSGGFSTTVSTEQNVPDPQVGITTMKDLKGKANRGKMDVSGVQAPVGAITTIEDPALAKKVPETFPELKPGESRHTSDHMSIYKFMGRSHFLCTFTFNSNNKEYTFPITLSSTSNPPHGLPSTLRWFFNLFQLYRGPLDLTIIITGATDVDGMAWFTPVGLAVDTPWVEKESALSIDYKTALGAVRFNTRRTGNIQIRLPWYSYLYAVSGALDGLGDKTDSTFGLVSIQIANYNHSDEYLSFSCYLSVTQQSEFYFPRAPLNSNAMLSTESMMSRIAAGDLESSVDDPRSEEDRRFESHIECRKPYKELRLEVGKQRLKYAQEELSNEVLPPPRKMKGLFSQAKISLFYTEEHEIMKF.

2 consecutive short sequence motifs ((L)YPX(n)L motif) follow at residues 167–171 and 200–205; these read YPHGL and YPVWEL. The interval 766 to 836 is involved in P1-2A pentamerization; it reads MMSRIAAGDL…PRKMKGLFSQ (71 aa).

Belongs to the picornaviridae polyprotein family. Homodimer. Homomultimer; probably interacts with membranes in a multimeric form. Seems to assemble into amyloid-like fibers. As to quaternary structure, homopentamer. Homooligomer. In terms of assembly, interacts with capsid protein VP2. Interacts with capsid protein VP3. Interacts with capsid protein VP1. Interacts with capsid protein VP3. As to quaternary structure, interacts with capsid protein VP1. Interacts with capsid protein VP2. Specific enzymatic cleavages by viral protease in vivo yield a variety of precursors and mature proteins. Polyprotein processing intermediates are produced, such as P1-2A which is a functional precursor of the structural proteins, VP0 which is a VP4-VP2 precursor, VP1-2A precursor, 3ABC precursor which is a stable and catalytically active precursor of 3A, 3B and 3C proteins, 3AB and 3CD precursors. The assembly signal 2A is removed from VP1-2A by a host protease, possibly host Cathepsin L. This cleavage occurs over a region of 3 amino-acids probably generating VP1 proteins with heterogeneous C-termini. Post-translationally, during virion maturation, immature virions are rendered infectious following cleavage of VP0 into VP4 and VP2. This maturation seems to be an autocatalytic event triggered by the presence of RNA in the capsid and is followed by a conformational change of the particle. In terms of processing, the assembly signal 2A is removed from VP1-2A by a host protease, possibly host Cathepsin L in naked virions. This cleavage does not occur in enveloped virions. This cleavage occurs over a region of 3 amino-acids probably generating VP1 proteins with heterogeneous C-termini. Viral protein genome-linked: VPg is uridylylated prior to priming replication into VPg-pUpU. Post-translationally, unlike other picornaviruses, does not seem to be myristoylated.

The protein resides in the virion. It is found in the host endosome. Its subcellular location is the host multivesicular body. It localises to the host membrane. In terms of biological role, capsid proteins VP1, VP2, and VP3 form a closed capsid enclosing the viral positive strand RNA genome. All these proteins contain a beta-sheet structure called beta-barrel jelly roll. Together they form an icosahedral capsid (T=3) composed of 60 copies of each VP1, VP2, and VP3, with a diameter of approximately 300 Angstroms. VP1 is situated at the 12 fivefold axes, whereas VP2 and VP3 are located at the quasi-sixfold axes. The naked capsid interacts with the host receptor HAVCR1 to provide virion attachment to and probably entry into the target cell. Functionally, VP0 precursor is a component of the immature procapsids. Its function is as follows. Plays a role in the assembly of the 12 pentamers into an icosahedral structure. Has not been detected in mature virions, supposedly owing to its small size. Precursor component of immature procapsids that corresponds to an extended form of the structural protein VP1. After maturation, possibly by the host Cathepsin L, the assembly signal 2A is cleaved to give rise to the mature VP1 protein. In terms of biological role, affects membrane integrity and causes an increase in membrane permeability. Functionally, functions as a viroporin. Affects membrane integrity and causes an increase in membrane permeability. Involved in host intracellular membrane rearrangements probably to give rise to the viral factories. Does not disrupt calcium homeostasis or glycoprotein trafficking. Antagonizes the innate immune response of the host by suppressing IFN-beta synthesis, which it achieves by interfering with the RIG-I/IFIH1 pathway. The sequence is that of Genome polyprotein from Cercopithecus hamlyni (Owl-faced monkey).